Reading from the N-terminus, the 264-residue chain is Chanoclavine-I dehydrogenase easD (264 aa).

The signal sequence occupies residues 1-20; sequence MASVSSKIFAITGGASGIGA. 6 residues coordinate NADP(+): I18, D66, R132, Y169, K173, and T204. Y169 functions as the Proton donor in the catalytic mechanism. K173 serves as the catalytic Lowers pKa of active site Tyr.

It belongs to the short-chain dehydrogenases/reductases (SDR) family. As to quaternary structure, homotetramer.

It carries out the reaction chanoclavine-I + NAD(+) = chanoclavine-I aldehyde + NADH + H(+). It functions in the pathway alkaloid biosynthesis; ergot alkaloid biosynthesis. In terms of biological role, chanoclavine-I dehydrogenase; part of the gene cluster that mediates the biosynthesis of fungal ergot alkaloid. DmaW catalyzes the first step of ergot alkaloid biosynthesis by condensing dimethylallyl diphosphate (DMAP) and tryptophan to form 4-dimethylallyl-L-tryptophan. The second step is catalyzed by the methyltransferase easF that methylates 4-dimethylallyl-L-tryptophan in the presence of S-adenosyl-L-methionine, resulting in the formation of 4-dimethylallyl-L-abrine. The catalase easC and the FAD-dependent oxidoreductase easE then transform 4-dimethylallyl-L-abrine to chanoclavine-I which is further oxidized by easD in the presence of NAD(+), resulting in the formation of chanoclavine-I aldehyde. Chanoclavine-I aldehyde is the precursor of ergoamides and ergopeptines in Clavicipitaceae, and clavine-type alcaloids such as fumiclavine in Trichocomaceae. However, the metabolites downstream of chanoclavine-I aldehyde in Arthrodermataceae have not been identified yet. The polypeptide is Chanoclavine-I dehydrogenase easD (Arthroderma otae (strain ATCC MYA-4605 / CBS 113480) (Microsporum canis)).